An 869-amino-acid chain; its full sequence is DNA mismatch repair protein MutS (869 aa).

ATP is bound at residue 619–626; the sequence is GPNMAGKS.

This sequence belongs to the DNA mismatch repair MutS family.

Functionally, this protein is involved in the repair of mismatches in DNA. It is possible that it carries out the mismatch recognition step. This protein has a weak ATPase activity. The polypeptide is DNA mismatch repair protein MutS (Caldanaerobacter subterraneus subsp. tengcongensis (strain DSM 15242 / JCM 11007 / NBRC 100824 / MB4) (Thermoanaerobacter tengcongensis)).